The chain runs to 96 residues: UPF0235 protein VC_0458 (96 aa).

Belongs to the UPF0235 family.

This Vibrio cholerae serotype O1 (strain ATCC 39315 / El Tor Inaba N16961) protein is UPF0235 protein VC_0458.